The primary structure comprises 600 residues: Glutamine--fructose-6-phosphate aminotransferase [isomerizing] (600 aa).

Cys-2 functions as the Nucleophile; for GATase activity in the catalytic mechanism. In terms of domain architecture, Glutamine amidotransferase type-2 spans 2–217 (CGIVGYIGQL…DKEMVIVTDD (216 aa)). SIS domains lie at 283-422 (IAAA…KNGI) and 452-590 (IARE…VDKP). The active-site For Fru-6P isomerization activity is Lys-595.

Homodimer.

It is found in the cytoplasm. The enzyme catalyses D-fructose 6-phosphate + L-glutamine = D-glucosamine 6-phosphate + L-glutamate. Its function is as follows. Catalyzes the first step in hexosamine metabolism, converting fructose-6P into glucosamine-6P using glutamine as a nitrogen source. This chain is Glutamine--fructose-6-phosphate aminotransferase [isomerizing], found in Bacillus subtilis (strain 168).